We begin with the raw amino-acid sequence, 930 residues long: Protein translocase subunit SecA (930 aa).

ATP is bound by residues Gln-83, 101-105, and Asp-491; that span reads GEGKT.

It belongs to the SecA family. In terms of assembly, monomer and homodimer. Part of the essential Sec protein translocation apparatus which comprises SecA, SecYEG and auxiliary proteins SecDF. Other proteins may also be involved.

Its subcellular location is the cell inner membrane. It is found in the cellular thylakoid membrane. The protein resides in the cytoplasm. The catalysed reaction is ATP + H2O + cellular proteinSide 1 = ADP + phosphate + cellular proteinSide 2.. Part of the Sec protein translocase complex. Interacts with the SecYEG preprotein conducting channel. Has a central role in coupling the hydrolysis of ATP to the transfer of proteins into and across the cell membrane, serving as an ATP-driven molecular motor driving the stepwise translocation of polypeptide chains across the membrane. Its function is as follows. Probably participates in protein translocation into and across both the cytoplasmic and thylakoid membranes in cyanobacterial cells. The chain is Protein translocase subunit SecA from Nostoc sp. (strain PCC 7120 / SAG 25.82 / UTEX 2576).